Here is a 162-residue protein sequence, read N- to C-terminus: uncharacterized protein (162 aa).

Belongs to the LOR family.

This is an uncharacterized protein from Bacillus subtilis (strain 168).